The following is a 273-amino-acid chain: Dermonecrotic toxin LhSicTox-alphaIA2aviii (273 aa).

The active site involves histidine 5. Residues glutamate 25 and aspartate 27 each coordinate Mg(2+). The active-site Nucleophile is histidine 41. Disulfide bonds link cysteine 45–cysteine 51 and cysteine 47–cysteine 190. Aspartate 85 contributes to the Mg(2+) binding site.

This sequence belongs to the arthropod phospholipase D family. Class II subfamily. Mg(2+) is required as a cofactor. As to expression, expressed by the venom gland.

Its subcellular location is the secreted. It catalyses the reaction an N-(acyl)-sphingosylphosphocholine = an N-(acyl)-sphingosyl-1,3-cyclic phosphate + choline. It carries out the reaction an N-(acyl)-sphingosylphosphoethanolamine = an N-(acyl)-sphingosyl-1,3-cyclic phosphate + ethanolamine. The enzyme catalyses a 1-acyl-sn-glycero-3-phosphocholine = a 1-acyl-sn-glycero-2,3-cyclic phosphate + choline. The catalysed reaction is a 1-acyl-sn-glycero-3-phosphoethanolamine = a 1-acyl-sn-glycero-2,3-cyclic phosphate + ethanolamine. Dermonecrotic toxins cleave the phosphodiester linkage between the phosphate and headgroup of certain phospholipids (sphingolipid and lysolipid substrates), forming an alcohol (often choline) and a cyclic phosphate. This toxin acts on sphingomyelin (SM). It may also act on ceramide phosphoethanolamine (CPE), lysophosphatidylcholine (LPC) and lysophosphatidylethanolamine (LPE), but not on lysophosphatidylserine (LPS), and lysophosphatidylglycerol (LPG). It acts by transphosphatidylation, releasing exclusively cyclic phosphate products as second products. Induces dermonecrosis, hemolysis, increased vascular permeability, edema, inflammatory response, and platelet aggregation. This chain is Dermonecrotic toxin LhSicTox-alphaIA2aviii, found in Loxosceles hirsuta (Recluse spider).